Here is a 164-residue protein sequence, read N- to C-terminus: Cold-inducible RNA-binding protein (164 aa).

The 79-residue stretch at 6-84 (GKLFVGGLSF…RQIRVDQAGK (79 aa)) folds into the RRM domain. Residues 65 to 164 (AGMNGKTVDG…SYRDSYDSYG (100 aa)) are disordered. A compositionally biased stretch (gly residues) spans 93–118 (YRGGSSGGGRGFFRGGRGRGGGGYGG). Positions 155–164 (SYRDSYDSYG) are enriched in basic and acidic residues.

In terms of assembly, interacts with prmt1. Interacts with elavl1/elrA (via RRM3). Associates with ribosomes. Post-translationally, methylated on arginine residues within RGG motifs. Methylation by prmt1 promotes cytoplasmic accumulation.

The protein localises to the nucleus. It is found in the nucleoplasm. It localises to the cytoplasm. In terms of biological role, cold-inducible mRNA binding protein. Acts cooperatively with elavl1/elrA to stabilize AU-rich element (ARE)-containing mRNAs by binding to them and inhibiting their deadenylation. Essential for embryonic gastrulation and neural development, acting to maintain the expression of a set of adhesion molecules, and cell movement during embryogenesis. Required for pronephros development. May play a role in hibernation. This Aquarana catesbeiana (American bullfrog) protein is Cold-inducible RNA-binding protein.